A 270-amino-acid chain; its full sequence is Glutamate racemase (270 aa).

Residues 14–15 (DS) and 46–47 (YG) contribute to the substrate site. Cys77 acts as the Proton donor/acceptor in catalysis. 78-79 (NT) is a binding site for substrate. Catalysis depends on Cys189, which acts as the Proton donor/acceptor. 190-191 (TH) provides a ligand contact to substrate.

Belongs to the aspartate/glutamate racemases family.

The enzyme catalyses L-glutamate = D-glutamate. It functions in the pathway cell wall biogenesis; peptidoglycan biosynthesis. Provides the (R)-glutamate required for cell wall biosynthesis. In Neisseria meningitidis serogroup A / serotype 4A (strain DSM 15465 / Z2491), this protein is Glutamate racemase.